The primary structure comprises 89 residues: Small ribosomal subunit protein uS17 (89 aa).

It belongs to the universal ribosomal protein uS17 family. In terms of assembly, part of the 30S ribosomal subunit.

One of the primary rRNA binding proteins, it binds specifically to the 5'-end of 16S ribosomal RNA. The chain is Small ribosomal subunit protein uS17 from Chlorobaculum tepidum (strain ATCC 49652 / DSM 12025 / NBRC 103806 / TLS) (Chlorobium tepidum).